We begin with the raw amino-acid sequence, 272 residues long: Insulin-like growth factor-binding protein 1 (272 aa).

The signal sequence occupies residues 1 to 25 (MPEVPAAGLWPFLLLLAVQVSTVAS). Positions 28–109 (QPWHCAPCSA…TRGQGACVPE (82 aa)) constitute an IGFBP N-terminal domain. 5 disulfide bridges follow: C32-C59, C35-C61, C43-C62, C50-C65, and C73-C86. S139, S157, and S169 each carry phosphoserine. Residue T170 is modified to Phosphothreonine. Residue Y171 is modified to Phosphotyrosine. Positions 186–264 (KQPCRRELYK…SLEIRGDPNC (79 aa)) constitute a Thyroglobulin type-1 domain. 3 cysteine pairs are disulfide-bonded: C189–C219, C230–C241, and C243–C264. S255 carries the post-translational modification Phosphoserine. The Cell attachment site signature appears at 259-261 (RGD).

Binds equally well IGF1 and IGF2. Interacts with integrin ITGA5:ITGB1. Interacts with VHL; this interaction inhibits HIF1A degradation.

Its subcellular location is the secreted. Multifunctional protein that plays a critical role in regulating the availability of IGFs such as IGF1 and IGF2 to their receptors and thereby regulates IGF-mediated cellular processes including cell migration, proliferation, differentiation or apoptosis in a cell-type specific manner. Also plays a positive role in cell migration by interacting with integrin ITGA5:ITGB1 through its RGD motif. Mechanistically, binding to integrins leads to activation of focal adhesion kinase/PTK2 and stimulation of the mitogen-activated protein kinase (MAPK) pathway. Regulates cardiomyocyte apoptosis by suppressing HIF-1alpha/HIF1A degradation through ubiquitination. The protein is Insulin-like growth factor-binding protein 1 (IGFBP1) of Ictidomys tridecemlineatus (Thirteen-lined ground squirrel).